A 340-amino-acid chain; its full sequence is uncharacterized protein (340 aa).

A helical transmembrane segment spans residues Ile-6–Leu-26.

It localises to the cell membrane. This is an uncharacterized protein from Bacillus subtilis (strain 168).